A 1961-amino-acid polypeptide reads, in one-letter code: MAQQAADKYLYVDKNFINNPLAQADCGAKKLVWVPSTKNGFEPASLKEEVGEEAIVELVENGKKVKVNKDDIQKMNPPKFSKVEDMAELTCLNEASVLHNLKERYYSGLIYTYSGLFCVVINPYKNLPIYSEEIVDMYKGKKRHEMPPHIYAITDTAYRSMMQDREDQSILCTGESGAGKTENTKKVIQYLAHVASSHKSKKDQGELERQLLQANPILEAFGNAKTVKNDNSSRFGKFIRINFDVNGYIVGANIETYLLEKSRAIRQAKEERTFHIFYYLLSGAGEHLKTDLLLEPYNKYRFLSNGHVTIPGQQDKDMFQETMEAMRIMGIPEDEQMGLLRVISGVLQLGNIVFKKERNTDQASMPDNTAAQKVSHLLGINVTDFTRGILTPRIKVGRDYVQKAQTKEQADFAIEALAKATYERMFRWLVLRINKALDKTKRQGASFIGILDIAGFEIFDLNSFEQLCINYTNEKLQQLFNHTMFILEQEEYQREGIEWNFIDFGLDLQPCIDLIEKPAGPPGILALLDEECWFPKATDKSFVEKVVQEQGTHPKFQKPKQLKDKADFCIIHYAGKVDYKADEWLMKNMDPLNDNIATLLHQSSDKFVSELWKDVDRIIGLDQVAGMSETALPGAFKTRKGMFRTVGQLYKEQLAKLMATLRNTNPNFVCCIIPNHEKKAGKLDPHLVLDQLRCNGVLEGIRICRQGFPNRVVFQEFRQRYEILTPNSIPKGFMDGKQACVLMIKALELDSNLYRIGQSKVFFRSGVLAHLEEERDLKITDVIIGFQACCRGYLARKAFAKRQQQLTAMKVLQRNCAAYLRLRNWQWWRLFTKVKPLLNSIRHEDELLAKEAELTKVREKHLAAENRLTEMETMQSQLMAEKLQLQEQLQAKTELCAEAEELRARLTAKKQELEEICHDLEARVEEEEERCQYLQAEKKKMQQNIQELEEQLEEEESARQKLQLEKVTTEAKLKKLEEDQIIMEDQNCKLAKEKKLLEDRVAEFTTDLMEEEEKSKSLAKLKNKHEAMITDLEERLRREEKQRQELEKTRRKLEGDSTDLSDQIAELQAQIAELKMQLAKKEEELQAALARVEEEAAQKNMALKKIRELETQISELQEDLESERACRNKAEKQKRDLGEELEALKTELEDTLDSTAAQQELRSKREQEVSILKKTLEDEAKTHEAQIQEMRQKHSQAVEELAEQLEQTKRVKATLEKAKQTLENERGELANEVKALLQGKGDSEHKRKKVEAQLQELQVKFSEGERVRTELADKVSKLQVELDSVTGLLNQSDSKSSKLTKDFSALESQLQDTQELLQEENRQKLSLSTKLKQMEDEKNSFREQLEEEEEEAKRNLEKQIATLHAQVTDMKKKMEDGVGCLETAEEAKRRLQKDLEGLSQRLEEKVAAYDKLEKTKTRLQQELDDLLVDLDHQRQSVSNLEKKQKKFDQLLAEEKTISAKYAEERDRAEAEAREKETKALSLARALEEAMEQKAELERLNKQFRTEMEDLMSSKDDVGKSVHELEKSNRALEQQVEEMKTQLEELEDELQATEDAKLRLEVNLQAMKAQFERDLQGRDEQSEEKKKQLVRQVREMEAELEDERKQRSIAMAARKKLEMDLKDLEAHIDTANKNREEAIKQLRKLQAQMKDCMRDVDDTRASREEILAQAKENEKKLKSMEAEMIQLQEELAAAERAKRQAQQERDELADEIANSSGKGALALEEKRRLEALIALLEEELEEEQGNTELINDRLKKANLQIDQINTDLNLERSHAQKNENARQQLERQNKELKAKLQEMESAVKSKYKASIAALEAKIAQLEEQLDNETKERQAASKQVRRAEKKLKDVLLQVEDERRNAEQFKDQADKASTRLKQLKRQLEEAEEEAQRANASRRKLQRELEDATETADAMNREVSSLKNKLRRGDMPFVVTRRIVRKGTGDCSDEEVDGKADGADAKATE.

Ala-2 is modified (N-acetylalanine). Positions 2–838 (AQQAADKYLY…RLFTKVKPLL (837 aa)) are mediates interaction with LIMCH1. At Lys-8 the chain carries N6-acetyllysine. A Phosphotyrosine modification is found at Tyr-11. Positions 27-77 (GAKKLVWVPSTKNGFEPASLKEEVGEEAIVELVENGKKVKVNKDDIQKMNP) constitute a Myosin N-terminal SH3-like domain. In terms of domain architecture, Myosin motor spans 81-776 (SKVEDMAELT…VLAHLEEERD (696 aa)). Residue Lys-102 is modified to N6-acetyllysine. 174-181 (GESGAGKT) provides a ligand contact to ATP. N6-acetyllysine is present on residues Lys-299, Lys-435, and Lys-613. Ser-628 bears the Phosphoserine mark. The interval 654-676 (LAKLMATLRNTNPNFVCCIIPNH) is actin-binding. Tyr-754 is subject to Phosphotyrosine. Positions 779–808 (ITDVIIGFQACCRGYLARKAFAKRQQQLTA) constitute an IQ domain. A coiled-coil region spans residues 841–1927 (IRHEDELLAK…LKNKLRRGDM (1087 aa)). Lys-850 carries the post-translational modification N6-succinyllysine. 3 positions are modified to N6-acetyllysine: Lys-860, Lys-975, and Lys-1024. Residues 1035 to 1055 (RLRREEKQRQELEKTRRKLEG) show a composition bias toward basic and acidic residues. The interval 1035-1057 (RLRREEKQRQELEKTRRKLEGDS) is disordered. At Ser-1114 the chain carries Phosphoserine. N6-acetyllysine is present on residues Lys-1234 and Lys-1249. Residues 1331–1353 (LKQMEDEKNSFREQLEEEEEEAK) form a disordered region. Residues 1332 to 1344 (KQMEDEKNSFREQ) show a composition bias toward basic and acidic residues. N6-acetyllysine is present on residues Lys-1358, Lys-1393, Lys-1405, Lys-1411, Lys-1460, and Lys-1639. An N6-succinyllysine modification is found at Lys-1670. The residue at position 1715 (Ser-1715) is a Phosphoserine. N6-acetyllysine occurs at positions 1794, 1803, and 1846. The tract at residues 1878-1910 (RQLEEAEEEAQRANASRRKLQRELEDATETADA) is disordered. Residue Arg-1924 is modified to Omega-N-methylarginine. Residues 1938-1961 (KGTGDCSDEEVDGKADGADAKATE) are disordered. Ser-1944 is modified (phosphoserine). The span at 1949–1961 (DGKADGADAKATE) shows a compositional bias: basic and acidic residues.

Belongs to the TRAFAC class myosin-kinesin ATPase superfamily. Myosin family. As to quaternary structure, myosin is a hexameric protein that consists of 2 heavy chain subunits (MHC), 2 alkali light chain subunits (MLC) and 2 regulatory light chain subunits (MLC-2). Interacts with RASIP1. Interacts with DDR1. Interacts with PDLIM2. Interacts with SVIL. Interacts with HTRA3. Interacts with Myo7a. Interacts with CFAP95. Interacts with LIMCH1; independently of the integration of MYH9 into the myosin complex. Interacts with RAB3A. Interacts with ZBED4. Interacts with S100A4; this interaction increases cell motility. Post-translationally, ISGylated. In terms of processing, ubiquitination.

It is found in the cytoplasm. The protein resides in the cytoskeleton. The protein localises to the cell cortex. Its subcellular location is the cytoplasmic vesicle. It localises to the secretory vesicle. It is found in the cortical granule. Its function is as follows. Cellular myosin that appears to play a role in cytokinesis, cell shape, and specialized functions such as secretion and capping. Required for cortical actin clearance prior to oocyte exocytosis. Promotes cell motility in conjunction with S100A4. During cell spreading, plays an important role in cytoskeleton reorganization, focal contact formation (in the margins but not the central part of spreading cells), and lamellipodial retraction; this function is mechanically antagonized by MYH10. In Rattus norvegicus (Rat), this protein is Myosin-9 (Myh9).